The primary structure comprises 1431 residues: MDSDLMDFFDFSKQFSRAPAPKGYITGDPTAFATETIDSKPIKRELIGKDYVHEVVEKEKHLMKKLADGYNTSKNRRTLDELDSDDDEVLMKELPSVRSDEEYYKKYRFDLNRNKNLPIYEQREDILAAIRENPVVILKGETGCGKTTQVPQYILDEAFKRREFCNIVVTQPRRIAAISIANRVCHERKWQPGTVCSYQVGLHRQSNLEDTRLLYCTTGVLLNNLVRVKTLTQYTHIILDEVHERDQDMDFLLLVVRRLLALNSRHVKVILMSATIDTREFSKYFAMSSSLPPVVTASHGRKFPLVKFYRDQLKNIHWKDEPQRTTPGIGPEGYSDAIKLLLVIDNMERKADNQSQQSYEEAKRTGAVLIFLPGIHEIDTMAEHIGRIVDENPNFKISIVRCHSLMSPDSQEEVFLPPPLGHRKVILTTNISESSITVPDVSYVIDFCLTKVLHTDTASNFSSLRLEWASKVNCRQRAGRVGRLRSGRVYRMVTKDFYMNHMNEFGIPEMLRSPLQNSVLKAKELEMGNPSEILALAMSPPNLSDIQNTVLLLKEVGALYTTVDGVYEELDGDLSFWGKIMSKFPLDVRLSRLIILGYVFNCLDEAIVIAAGMTVRSLYVTGSRGQMNEAFWMHYIFADGSGSDMIGIWRVYRIYLNMCQDRMLKESAQQWARRFNVNLRSLKEMHLMVQDLRQRCASLNIQPLPYGACHMWDDREKSIILKVIIAGAFYPNYFMRSNKANADYDRSLFQTICGNDPCRTVYFTNFEPRYMGELYTRRIKELFLEAKIPPENIDVTFQHGSEKVFVTFKPDDEDIDTTKVVQVPGRVMTEVYKAVRMRLENQNRPLRVMDQNSAFKYVEQNRIGVISDCTWVPPSNQWPVELLTLPSVFDKTIFGLITHVANCGKFYFQPQALAERIASMSEIFNRSLELSCYVQNAKAVTKGLQLLAKRGNLYQRAVVLKVETQINGYPRFRVRFIDYGDVAVVPIDKLRLMSPQLKRDFERLPPRMFECRLALVQPSSVASSYNQWPQHANEMLISVAKSGRVELEIYSLVNNVAAVLIHTRGGVLNDMLVDRQLARRADEDYMSRKDHDLRLRKQETKRNVSITDQRLINEEYLRFAQLPKDTDLEPPPLNKCNLSIRLKGPYSPLEASLNSLLRIGMYKSVYIDKESVNSVLLDSDPQDRHDQMVVAASVTEAFDNLTVRGTTLMPNIHGFGALMAMLFCPTMQIKCNKDRTKYVSILAGLGYNPDTMQPHFEEHDMVINLDVAILKDDIRIINQMRYNIDSMFYNFDVNEMPSVGTEDRVVIFNQLRSLLIRLLGKDRSFIERHVSNFEYLWEDMSDLEPPSEPYGKRAIFPMHSSYDFESENMGNLLSLQANCKELYSWRNFEGTMQPMKCRLCNDTLESVAELRLHLLTQLHRDREKQVGWKQN.

The region spanning 127–294 (LAAIRENPVV…FAMSSSLPPV (168 aa)) is the Helicase ATP-binding domain. 140–147 (GETGCGKT) serves as a coordination point for ATP. A DEAH box motif is present at residues 240–243 (DEVH). Residues 354-526 (QSQQSYEEAK…NSVLKAKELE (173 aa)) enclose the Helicase C-terminal domain. A Tudor domain is found at 937–1000 (AKAVTKGLQL…RLMSPQLKRD (64 aa)).

Belongs to the DEAD box helicase family. DEAH subfamily.

It is found in the cytoplasm. The catalysed reaction is ATP + H2O = ADP + phosphate + H(+). Probable ATP-binding RNA helicase which plays a central role during spermatogenesis and oogenesis by repressing transposable elements and preventing their mobilization, which is essential for the germline integrity. Acts via the piRNA metabolic process, which mediates the repression of transposable elements during meiosis by forming complexes composed of piRNAs and Piwi and govern the methylation and subsequent repression of transposons. Involved in the repression of LTR retrotransposon copia. Also involved in telomere regulation by repressing specialized telomeric retroelements HeT-A, TAHRE, and TART; Drosophila telomeres being maintained by transposition of specialized telomeric retroelements. Involved in telomeric trans-silencing, a repression mechanism by which a transposon or a transgene inserted in subtelomeric heterochromatin has the capacity to repress in trans in the female germline, a homologous transposon, or transgene located in euchromatin. Involved in the repression of testis-expressed Stellate genes by the homologous Su(Ste) repeats. Required for anteroposterior and dorsoventral axis formation during oogenesis. In Drosophila mojavensis (Fruit fly), this protein is Probable ATP-dependent RNA helicase spindle-E (spn-E).